The chain runs to 185 residues: MISVNDFRTGLTIEVDGGIWRVVDFQHVKPGKGAAFVRSKLRNLRTGAIQEKTFRAGEKVARAQIETKTMQYLYANGDQHVFMDTTSYEQLELNEKQIEHELKFLLENMSVQIMMYQTETIGIELPNTVELKVVETEPGIKGDTASGGTKPAKTETGLVVNVPFFVNEGDTLVVNTSDGSYVSRA.

This sequence belongs to the elongation factor P family.

Its subcellular location is the cytoplasm. It participates in protein biosynthesis; polypeptide chain elongation. Functionally, involved in peptide bond synthesis. Stimulates efficient translation and peptide-bond synthesis on native or reconstituted 70S ribosomes in vitro. Probably functions indirectly by altering the affinity of the ribosome for aminoacyl-tRNA, thus increasing their reactivity as acceptors for peptidyl transferase. This Bacillus licheniformis (strain ATCC 14580 / DSM 13 / JCM 2505 / CCUG 7422 / NBRC 12200 / NCIMB 9375 / NCTC 10341 / NRRL NRS-1264 / Gibson 46) protein is Elongation factor P.